The chain runs to 82 residues: ATP synthase subunit c (82 aa).

2 helical membrane-spanning segments follow: residues 7–27 and 53–73; these read FVALAAGLIIGLGAVGACIGI and FLLAGLIDAAFLIGVGIAMMF.

This sequence belongs to the ATPase C chain family. F-type ATPases have 2 components, F(1) - the catalytic core - and F(0) - the membrane proton channel. F(1) has five subunits: alpha(3), beta(3), gamma(1), delta(1), epsilon(1). F(0) has three main subunits: a(1), b(2) and c(10-14). The alpha and beta chains form an alternating ring which encloses part of the gamma chain. F(1) is attached to F(0) by a central stalk formed by the gamma and epsilon chains, while a peripheral stalk is formed by the delta and b chains.

The protein resides in the cell inner membrane. Functionally, f(1)F(0) ATP synthase produces ATP from ADP in the presence of a proton or sodium gradient. F-type ATPases consist of two structural domains, F(1) containing the extramembraneous catalytic core and F(0) containing the membrane proton channel, linked together by a central stalk and a peripheral stalk. During catalysis, ATP synthesis in the catalytic domain of F(1) is coupled via a rotary mechanism of the central stalk subunits to proton translocation. In terms of biological role, key component of the F(0) channel; it plays a direct role in translocation across the membrane. A homomeric c-ring of between 10-14 subunits forms the central stalk rotor element with the F(1) delta and epsilon subunits. The sequence is that of ATP synthase subunit c from Polaromonas sp. (strain JS666 / ATCC BAA-500).